A 343-amino-acid polypeptide reads, in one-letter code: Zinc finger protein Gfi-1b (343 aa).

The interval 1 to 20 is mediates repression of transcription; it reads MPRSFLVKSKKTHTYNQHRY. Positions 1–20 are SNAG domain; that stretch reads MPRSFLVKSKKTHTYNQHRY. The segment at 51–77 is disordered; sequence STDPTEKQHTPENVITEEARSDPGDPR. Basic and acidic residues predominate over residues 67–77; it reads EEARSDPGDPR. 6 consecutive C2H2-type zinc fingers follow at residues 176 to 199, 205 to 227, 233 to 255, 261 to 283, 289 to 311, and 317 to 340; these read YHCV…RRSH, FVCN…LNVH, FECK…LLIH, YPCQ…TYIH, HKCQ…SRKH, and FSCD…ENQH.

It localises to the nucleus. Functionally, essential transcriptional regulator necessary for development and differentiation of erythroid and megakaryocytic lineages. Alters histone methylation by recruiting histone methyltransferase to target genes promoters. Plays a role in heterochromatin formation. This chain is Zinc finger protein Gfi-1b (gfi1b), found in Xenopus laevis (African clawed frog).